The sequence spans 415 residues: MKAISVLGSTGSIGTQTLQIAEEFPEQFRVVALTAGRNLKLLVEQVQRHRPEVVALADSDLLPELQERLKDAGVTGADAPQLVGGADGLNVAAAWDSADLVVTGIVGCAGLLPTLAAIRAGKDLALANKETLIAAGPVVLPELKKSGSRLLPADSEHSAIFQCLQGTPWAENARLSTGVPTPGLRRIQLTASGGAFRDWTAADLEKATVADATSHPNWSMGRKITVDSASLMNKGLEVIEAHYLFGLDYDHIEIVIHPQSIIHSMIELADSSVLAQLGWPDMKLPILYCLSWPSRLETPWRRLDLTEVGQLSFRAPDPAKYPCMELAYAAGSAGGTMPAVMNAANEEAVAQFLEEKIHFLDIPTVIEAACERHKPDLMAQPQLDDVLRVDQWARTAVREQVNRGVTRLPMGAIAA.

8 residues coordinate NADPH: T10, G11, S12, I13, G36, R37, N38, and N128. K129 provides a ligand contact to 1-deoxy-D-xylulose 5-phosphate. E130 contributes to the NADPH binding site. Residue D154 participates in Mn(2+) binding. 1-deoxy-D-xylulose 5-phosphate-binding residues include S155, E156, S192, and H215. Residue E156 coordinates Mn(2+). G221 provides a ligand contact to NADPH. 4 residues coordinate 1-deoxy-D-xylulose 5-phosphate: S228, N233, K234, and E237. E237 contacts Mn(2+).

Belongs to the DXR family. Requires Mg(2+) as cofactor. Mn(2+) is required as a cofactor.

The catalysed reaction is 2-C-methyl-D-erythritol 4-phosphate + NADP(+) = 1-deoxy-D-xylulose 5-phosphate + NADPH + H(+). It functions in the pathway isoprenoid biosynthesis; isopentenyl diphosphate biosynthesis via DXP pathway; isopentenyl diphosphate from 1-deoxy-D-xylulose 5-phosphate: step 1/6. Its function is as follows. Catalyzes the NADPH-dependent rearrangement and reduction of 1-deoxy-D-xylulose-5-phosphate (DXP) to 2-C-methyl-D-erythritol 4-phosphate (MEP). The protein is 1-deoxy-D-xylulose 5-phosphate reductoisomerase of Synechococcus sp. (strain CC9605).